The sequence spans 268 residues: Riboflavin transport system permease protein RibX (268 aa).

6 helical membrane passes run 24–44 (ALGL…GVTL), 76–96 (LATL…ALIL), 119–139 (AIPV…GLTS), 140–160 (KVLV…VVAI), 185–205 (VEAP…LALA), and 236–256 (LIFV…VLAG). In terms of domain architecture, ABC transmembrane type-1 spans 75–255 (TLATLSAALG…LITLTLYVLA (181 aa)).

Belongs to the binding-protein-dependent transport system permease family. In terms of assembly, the complex is likely composed of an ATP-binding protein, a transmembrane protein (RibX) and a solute-binding protein (RibY).

It is found in the cell membrane. Part of an ABC transporter complex that transports riboflavin into the cell. In Chloroflexus aurantiacus (strain ATCC 29366 / DSM 635 / J-10-fl), this protein is Riboflavin transport system permease protein RibX.